We begin with the raw amino-acid sequence, 281 residues long: Phosphoglycerate mutase-like protein AT74H (281 aa).

Residue His17 is the Tele-phosphohistidine intermediate of the active site. The Proton donor/acceptor role is filled by Glu109.

It belongs to the phosphoglycerate mutase family.

In terms of biological role, may play a role in carbohydrates metabolism. The protein is Phosphoglycerate mutase-like protein AT74H of Arabidopsis thaliana (Mouse-ear cress).